The chain runs to 289 residues: RNA exonuclease 4 (289 aa).

The span at 1-24 (MALSSNWQALLASESNPTSNGKNK) shows a compositional bias: polar residues. Positions 1 to 34 (MALSSNWQALLASESNPTSNGKNKQSNRKIRNVK) are disordered. Residues 25 to 34 (QSNRKIRNVK) show a composition bias toward basic residues. The Exonuclease domain occupies 121-273 (YIAMDCEFVG…EDARATMLLY (153 aa)).

This sequence belongs to the REXO4 family.

It localises to the nucleus. Its function is as follows. Exoribonuclease involved in ribosome biosynthesis. Involved in the processing of ITS1, the internal transcribed spacer localized between the 18S and 5.8S rRNAs. The protein is RNA exonuclease 4 (REX4) of Saccharomyces cerevisiae (strain ATCC 204508 / S288c) (Baker's yeast).